Here is a 122-residue protein sequence, read N- to C-terminus: MIVGIGVDIVELDRMARSMKQPRFLKRLLTDAEYELSQQYPLPRQIEFVSGRFAAKEAYAKAIGTGIAHGLSWRHIEILPDETGRPVMTAPFVGKIHVSISHSQTYAIAQVILEEEGHHVSS.

Mg(2+) is bound by residues D8 and E57.

It belongs to the P-Pant transferase superfamily. AcpS family. The cofactor is Mg(2+).

The protein localises to the cytoplasm. The catalysed reaction is apo-[ACP] + CoA = holo-[ACP] + adenosine 3',5'-bisphosphate + H(+). Functionally, transfers the 4'-phosphopantetheine moiety from coenzyme A to a Ser of acyl-carrier-protein. The chain is Holo-[acyl-carrier-protein] synthase from Exiguobacterium sp. (strain ATCC BAA-1283 / AT1b).